The chain runs to 107 residues: Phosphoribosyl-ATP pyrophosphatase (107 aa).

The protein belongs to the PRA-PH family.

It is found in the cytoplasm. It catalyses the reaction 1-(5-phospho-beta-D-ribosyl)-ATP + H2O = 1-(5-phospho-beta-D-ribosyl)-5'-AMP + diphosphate + H(+). It participates in amino-acid biosynthesis; L-histidine biosynthesis; L-histidine from 5-phospho-alpha-D-ribose 1-diphosphate: step 2/9. This is Phosphoribosyl-ATP pyrophosphatase from Bacillus cereus (strain AH187).